We begin with the raw amino-acid sequence, 1262 residues long: Cytoplasmic FMR1-interacting protein homolog (1262 aa).

The tract at residues 519 to 550 (LNRMTDVKGKKKSSAPKGDSANSSSSDIRIPR) is disordered.

This sequence belongs to the CYFIP family. As to quaternary structure, interacts with gex-3.

It localises to the cytoplasm. Its function is as follows. Required for initial steps of body morphogenesis. May play a role in egg laying and yolk protein clatherin-mediated endocytosis by oocytes during oogenesis. Plays a role in the formation of muscle connections, also called muscle arm extensions, between the body wall and the motor axons in the dorsal and ventral cord. The chain is Cytoplasmic FMR1-interacting protein homolog from Caenorhabditis elegans.